A 37-amino-acid polypeptide reads, in one-letter code: Cytochrome b6-f complex subunit 5 (37 aa).

A helical transmembrane segment spans residues 5–25 (LLSGIVPGLIPITLAGSFVIA).

The protein belongs to the PetG family. As to quaternary structure, the 4 large subunits of the cytochrome b6-f complex are cytochrome b6, subunit IV (17 kDa polypeptide, PetD), cytochrome f and the Rieske protein, while the 4 small subunits are PetG, PetL, PetM and PetN. The complex functions as a dimer.

It localises to the plastid membrane. Component of the cytochrome b6-f complex, which mediates electron transfer between photosystem II (PSII) and photosystem I (PSI), cyclic electron flow around PSI, and state transitions. PetG is required for either the stability or assembly of the cytochrome b6-f complex. The polypeptide is Cytochrome b6-f complex subunit 5 (Aneura mirabilis (Parasitic liverwort)).